We begin with the raw amino-acid sequence, 180 residues long: Nucleoside triphosphate/diphosphate phosphatase (180 aa).

Catalysis depends on arginine 26, which acts as the Proton donor. 6 residues coordinate Mg(2+): asparagine 90, aspartate 106, aspartate 108, aspartate 110, aspartate 123, and glutamate 126.

The protein belongs to the Ntdp family. It depends on Mg(2+) as a cofactor.

The catalysed reaction is a ribonucleoside 5'-triphosphate + H2O = a ribonucleoside 5'-diphosphate + phosphate + H(+). It carries out the reaction a ribonucleoside 5'-diphosphate + H2O = a ribonucleoside 5'-phosphate + phosphate + H(+). Has nucleoside phosphatase activity towards nucleoside triphosphates and nucleoside diphosphates. This is Nucleoside triphosphate/diphosphate phosphatase from Staphylococcus aureus (strain MSSA476).